Consider the following 704-residue polypeptide: DNA-directed DNA polymerase (704 aa).

Residues 1-187 form a 3'-5'exonuclease region; the sequence is MIVSDIEANA…TKALLEKLLS (187 aa). Mg(2+) contacts are provided by D5, E7, and D174. The tract at residues 202 to 704 is polymerase; sequence GYTTFWSESL…KMGPNWAICH (503 aa). Residues 262 to 338 are binding to host TrxA; sequence GSWYQPKGGT…VEHVVFNPSS (77 aa). The Mg(2+) site is built by D475 and A476. Positions 506, 518, 522, and 526 each coordinate substrate. D654 provides a ligand contact to Mg(2+).

Belongs to the DNA polymerase type-A family. In terms of assembly, composed of two subunits. One is encoded by the phage and the other is encoded by the host thioredoxin. Interacts with DNA primase/helicase; this interaction is essential for the coordination of DNA unwinding and nucleotide polymerization on duplex DNA. Interacts with the ssDNA-binding protein. Part of the replicase complex that includes the DNA polymerase, thioredoxin, the primase/helicase and the single-stranded DNA binding protein. Mg(2+) is required as a cofactor.

The catalysed reaction is DNA(n) + a 2'-deoxyribonucleoside 5'-triphosphate = DNA(n+1) + diphosphate. Its function is as follows. Replicates viral genomic DNA. This polymerase possesses two enzymatic activities: DNA synthesis (polymerase) and an exonucleolytic activity that degrades single-stranded DNA in the 3'-5' direction. Non-processive DNA polymerase that achieves processivity by binding to host thioredoxin (TrxA). This interaction increases the rate of dNTP incorporation to yield a processivity of approximately 800 nucleotides (nt) per binding event. Interacts with DNA helicase gp4 to coordinate nucleotide polymerization with unwinding of the DNA. The leading strand is synthesized continuously while synthesis of the lagging strand requires the synthesis of oligoribonucleotides by the primase domain of gp4. The chain is DNA-directed DNA polymerase from Escherichia phage T7 (Bacteriophage T7).